We begin with the raw amino-acid sequence, 255 residues long: MALPDFSMRQLLEAGVHFGHQTHRWNPKMKPYIFGDRNNIHIIDLAQTVPMLSRALQVVSDTVARGGRVLFVGTKRQASEIIADSAKRSAQYYVNSRWLGGMMTNWKTISNSIQRLRKLDEILGGEAQGFTKKERLNLEREREKLDKALGGIRDMGGTPDLMFIIDTNKEKIAIDEAKRLGIPVVAIIDSNCDPDLIDYPIPGNDDASRAIALYCELISRAAIDGIARQQSSSGRDLGASSEVPVEPALEEAAEG.

The interval 230 to 255 is disordered; the sequence is QSSSGRDLGASSEVPVEPALEEAAEG.

It belongs to the universal ribosomal protein uS2 family.

This chain is Small ribosomal subunit protein uS2, found in Rhizobium etli (strain CIAT 652).